A 311-amino-acid polypeptide reads, in one-letter code: MKTRIFIGSSKEGLEIAEYIKLQLGTKYECYLWTDDIFKFNESFLYTLLKEASLFDFGILVATKDDLSTIRDKSFDTPRDNVIFEFGLFLGRLGPSRAFVIQESGAKLPTDLLGITVPQFEKTIPLANSTSLNNEIERISKTIDEKITLGELGLLPSTVLAIGYFYNFVSIVCESIHTKSDIKVDDAIFKKFELNIVIPKDLDADIKKRATVYFKSKTLKEIQFETSSRNFPVFVTYDNQSKDVLKLYDMPTTLGGIDKAIEMFMRKGHIGKTSQQKLLEERELRNFQTTLQNLIDNDAFCRNIVKIIQEE.

Positions 4 to 121 (RIFIGSSKEG…LLGITVPQFE (118 aa)) constitute a TIR domain. The interval 157-311 (STVLAIGYFY…RNIVKIIQEE (155 aa)) is STING domain. 3',3'-c-di-GMP is bound by residues Phe168, Pro232, and Asp249.

In the C-terminal section; belongs to the bacterial STING family. Forms homodimers; in the presence of c-di-GMP forms filaments with an ordered array of parallel-stacked subunits.

The catalysed reaction is NAD(+) + H2O = ADP-D-ribose + nicotinamide + H(+). Its activity is regulated as follows. NAD(+) hydrolase activity is strongly stimulated by c-di-GMP, weakly by 3'3'-cGAMP, very weakly by c-di-AMP but not at all by 2'3'-cGAMP. Self-association of TIR domains is required for NADase activity. Functionally, effector protein of a CBASS antiviral system with NAD(+) hydrolase activity. CBASS (cyclic oligonucleotide-based antiphage signaling system) provides immunity against bacteriophage. The CD-NTase protein synthesizes cyclic nucleotides in response to infection; these serve as specific second messenger signals. The signals activate a diverse range of effectors, leading to bacterial cell death and thus abortive phage infection. A type I-D CBASS(GG) system. Its function is as follows. Binds c-di-GMP, does not bind cUMP-AMP. Upon activation by c-di-GMP forms filaments which hydrolyze NAD(+); filament formation is required for enzyme activation. The sequence is that of CD-NTase-associated protein 12 from Flavobacterium daejeonense.